Consider the following 168-residue polypeptide: Protein-export protein SecB (168 aa).

The segment at 1–20 is disordered; sequence MTDETAANGENEAGRQSQSS.

Belongs to the SecB family. In terms of assembly, homotetramer, a dimer of dimers. One homotetramer interacts with 1 SecA dimer.

The protein resides in the cytoplasm. Functionally, one of the proteins required for the normal export of preproteins out of the cell cytoplasm. It is a molecular chaperone that binds to a subset of precursor proteins, maintaining them in a translocation-competent state. It also specifically binds to its receptor SecA. The protein is Protein-export protein SecB of Rhodospirillum centenum (strain ATCC 51521 / SW).